We begin with the raw amino-acid sequence, 1211 residues long: Diacylglycerol kinase 1 (1211 aa).

A disordered region spans residues 174–244 (HHSLGGHLSH…RNSSKKSSNS (71 aa)). A compositionally biased stretch (polar residues) spans 197–230 (VTPSPLASGPSMFQASNPARRSVDSSPSHSATNH). The span at 231–244 (SQMSRNSSKKSSNS) shows a compositional bias: low complexity. EF-hand domains are found at residues 286–321 (RPED…MMAV) and 331–366 (ELRP…TIPL). Asp-299, Asp-301, Asn-303, Glu-310, Asp-344, Asp-346, Asp-348, Thr-350, and Glu-355 together coordinate Ca(2+). 2 Phorbol-ester/DAG-type zinc fingers span residues 382 to 432 (IHVW…PASC) and 449 to 498 (LHHW…KKEC). In terms of domain architecture, DAGKc spans 548–682 (ELSCPLLVFV…LDRWSIEVTN (135 aa)). 3 disordered regions span residues 789 to 841 (TLRT…ETEK), 874 to 893 (AATA…QRNK), and 910 to 958 (DHED…QQQQ). Residues 795–805 (SSSSSNTSSGS) show a composition bias toward low complexity. Over residues 826–841 (DVREKSVPRRSGETEK) the composition is skewed to basic and acidic residues. Residues 879 to 893 (PVGSNQSDNSSQRNK) are compositionally biased toward polar residues. Residues 931-958 (NSIPATPATPITPTTPNAASSVLQQQQQ) are compositionally biased toward low complexity.

It belongs to the eukaryotic diacylglycerol kinase family. In terms of tissue distribution, in 10-11 hours embryos, expression is abundant in a limited number of cells in the procephalic region and in the ventral nerve cord. Predominantly expressed in the adult nervous system and muscle: including compound eyes, brain cortex, fibrillar muscle, and tubular muscle.

It carries out the reaction a 1,2-diacyl-sn-glycerol + ATP = a 1,2-diacyl-sn-glycero-3-phosphate + ADP + H(+). Upon cell stimulation converts the second messenger diacylglycerol into phosphatidate, initiating the resynthesis of phosphatidylinositols and attenuating protein kinase C activity. May have a role in the development of the embryonic nervous system and the function of the adult nervous system and muscle; regulating signal transduction in neurons. In Drosophila melanogaster (Fruit fly), this protein is Diacylglycerol kinase 1 (Dgk).